We begin with the raw amino-acid sequence, 212 residues long: Protein ERP5 (212 aa).

A signal peptide spans 1–20 (MKYNIVHGICLLFAITQAVG). Topologically, residues 21–178 (AVHFYAKSGE…FRNQSESANS (158 aa)) are lumenal. Residues 31 to 124 (TKCFYEHLSR…TLRVFIELEI (94 aa)) form the GOLD domain. An N-linked (GlcNAc...) asparagine glycan is attached at asparagine 171. A helical transmembrane segment spans residues 179–199 (KIMTWSVFQLLILLGTCAFQL). Residues 200 to 212 (RYLKNFFVKQKVV) are Cytoplasmic-facing.

The protein belongs to the EMP24/GP25L family.

It is found in the endoplasmic reticulum membrane. Its function is as follows. Involved in vesicular protein trafficking. The chain is Protein ERP5 (ERP5) from Saccharomyces cerevisiae (strain ATCC 204508 / S288c) (Baker's yeast).